A 1698-amino-acid polypeptide reads, in one-letter code: Cullin-7 (1698 aa).

Positions 315-357 are disordered; that stretch reads QASDRPRSSARSPGSIFQPQLADVSPGLPAAQAQPSFRRSRRF. S339 is subject to Phosphoserine. Residues 360–433 form the CPH domain; sequence RSEFASGNTY…HWHMLEILGF (74 aa). Positions 601 to 611 are enriched in basic and acidic residues; that stretch reads SEDAAKVEAKE. The segment at 601–623 is disordered; that stretch reads SEDAAKVEAKEPPSQSPNTPLQR. The DOC domain occupies 814–993; sequence PINIPFFDVF…HTRLFYMVRA (180 aa). The tract at residues 1345–1370 is disordered; sequence GASGKEHKSEKEEEAGAAAVVDVAEG. K1576 participates in a covalent cross-link: Glycyl lysine isopeptide (Lys-Gly) (interchain with G-Cter in NEDD8).

The protein belongs to the cullin family. As to quaternary structure, component of the 3M complex, composed of core components CUL7, CCDC8 and OBSL1. Component of the Cul7-RING(FBXW8) complex consisting of CUL7, RBX1, SKP1 and FBXW8. Within the Cul7-RING(FBXW8) complex interacts with FBXW8 and RBX1, but not with SKP1. Interacts with CUL1 (via the C-terminal domain); the interaction seems to be mediated by FBXW8; it is likely specific to FBXW8, but not other F-box proteins. Interacts (via the CPH domain) with p53/TP53; the interaction preferentially involves tetrameric and dimeric p53/TP53; this interaction recruits p53/TP53 for ubiquitination by neddylated CUL1-RBX1. The CUL7-CUL9 heterodimer seems to interact specifically with p53/TP53. Interacts with FBXW8; interaction is mutually exclusive of binding to CUL9 or p53/TP53. Interacts with CUL9; leading to inhibited CUL9 activity. Interacts with OBSL1. Interacts (as part of the 3M complex) with HDAC4 and HDAC5; it is negatively regulated by ANKRA2. In terms of assembly, (Microbial infection) Interacts with SV40 Large T antigen; this interaction seems to inhibit CUL7. According to a report, may not be neddylated despite the conserved consensus site for neddylation at Lys-1576. Structural study of the Cul7-RING(FBXW8) reveals that both CUL7 and RBX1 are in orientations that are incompatible with neddylation. As to expression, highly expressed in fetal kidney and adult skeletal muscle. Also abundant in fetal brain, as well as in adult pancreas, kidney, placenta and heart. Detected in trophoblasts, lymphoblasts, osteoblasts, chondrocytes and skin fibroblasts.

It localises to the cytoplasm. The protein localises to the cytoskeleton. The protein resides in the microtubule organizing center. It is found in the centrosome. Its subcellular location is the perinuclear region. It localises to the golgi apparatus. It functions in the pathway protein modification; protein ubiquitination. Core component of the 3M and Cul7-RING(FBXW8) complexes, which mediate the ubiquitination and subsequent proteasomal degradation of target proteins. Core component of the 3M complex, a complex required to regulate microtubule dynamics and genome integrity. It is unclear how the 3M complex regulates microtubules, it could act by controlling the level of a microtubule stabilizer. The Cul7-RING(FBXW8) complex alone lacks ubiquitination activity and does not promote polyubiquitination and proteasomal degradation of p53/TP53. However it mediates recruitment of p53/TP53 for ubiquitination by neddylated CUL1-RBX1. Interaction with CUL9 is required to inhibit CUL9 activity and ubiquitination of BIRC5. The Cul7-RING(FBXW8) complex also mediates ubiquitination and consequent degradation of target proteins such as GORASP1, IRS1 and MAP4K1/HPK1. Ubiquitination of GORASP1 regulates Golgi morphogenesis and dendrite patterning in brain. Mediates ubiquitination and degradation of IRS1 in a mTOR-dependent manner: the Cul7-RING(FBXW8) complex recognizes and binds IRS1 previously phosphorylated by S6 kinase (RPS6KB1 or RPS6KB2). The Cul7-RING(FBXW8) complex also mediates ubiquitination of MAP4K1/HPK1: recognizes and binds autophosphorylated MAP4K1/HPK1, leading to its degradation, thereby affecting cell proliferation and differentiation. Acts as a regulator in trophoblast cell epithelial-mesenchymal transition and placental development. While the Cul7-RING(FBXW8) and the 3M complexes are associated and involved in common processes, CUL7 and the Cul7-RING(FBXW8) complex may have additional functions. Probably plays a role in the degradation of proteins involved in endothelial proliferation and/or differentiation. This Homo sapiens (Human) protein is Cullin-7 (CUL7).